The following is a 293-amino-acid chain: Phosphoribosylaminoimidazole-succinocarboxamide synthase (293 aa).

Belongs to the SAICAR synthetase family.

It catalyses the reaction 5-amino-1-(5-phospho-D-ribosyl)imidazole-4-carboxylate + L-aspartate + ATP = (2S)-2-[5-amino-1-(5-phospho-beta-D-ribosyl)imidazole-4-carboxamido]succinate + ADP + phosphate + 2 H(+). It functions in the pathway purine metabolism; IMP biosynthesis via de novo pathway; 5-amino-1-(5-phospho-D-ribosyl)imidazole-4-carboxamide from 5-amino-1-(5-phospho-D-ribosyl)imidazole-4-carboxylate: step 1/2. The chain is Phosphoribosylaminoimidazole-succinocarboxamide synthase from Desulfosudis oleivorans (strain DSM 6200 / JCM 39069 / Hxd3) (Desulfococcus oleovorans).